The primary structure comprises 305 residues: Glutaminase (305 aa).

7 residues coordinate substrate: Ser61, Asn113, Glu158, Asn165, Tyr189, Tyr241, and Val259.

The protein belongs to the glutaminase family. Homotetramer.

The enzyme catalyses L-glutamine + H2O = L-glutamate + NH4(+). This is Glutaminase from Clostridium botulinum (strain Loch Maree / Type A3).